We begin with the raw amino-acid sequence, 459 residues long: Phosphoglucosamine mutase (459 aa).

Ser102 serves as the catalytic Phosphoserine intermediate. The Mg(2+) site is built by Ser102, Asp243, Asp245, and Asp247. Phosphoserine is present on Ser102.

It belongs to the phosphohexose mutase family. Mg(2+) is required as a cofactor. In terms of processing, activated by phosphorylation.

The catalysed reaction is alpha-D-glucosamine 1-phosphate = D-glucosamine 6-phosphate. Functionally, catalyzes the conversion of glucosamine-6-phosphate to glucosamine-1-phosphate. This Bartonella quintana (strain Toulouse) (Rochalimaea quintana) protein is Phosphoglucosamine mutase.